The following is a 143-amino-acid chain: Large ribosomal subunit protein uL15 (143 aa).

Residues 1–51 are disordered; that stretch reads MRLNSIAPAPGSRPSAKRVGRGIGSGLGKTAGRGHKGQKARAGGYHKVGFE. The span at 21-31 shows a compositional bias: gly residues; the sequence is RGIGSGLGKTA.

This sequence belongs to the universal ribosomal protein uL15 family. Part of the 50S ribosomal subunit.

In terms of biological role, binds to the 23S rRNA. This Thioalkalivibrio sulfidiphilus (strain HL-EbGR7) protein is Large ribosomal subunit protein uL15.